The chain runs to 332 residues: Adenosine deaminase (332 aa).

Residues His12 and His14 each contribute to the Zn(2+) site. Positions 14, 16, and 170 each coordinate substrate. His197 serves as a coordination point for Zn(2+). Residue Glu200 is the Proton donor of the active site. Asp278 is a binding site for Zn(2+). Asp279 contributes to the substrate binding site.

Belongs to the metallo-dependent hydrolases superfamily. Adenosine and AMP deaminases family. Adenosine deaminase subfamily. It depends on Zn(2+) as a cofactor.

It carries out the reaction adenosine + H2O + H(+) = inosine + NH4(+). The enzyme catalyses 2'-deoxyadenosine + H2O + H(+) = 2'-deoxyinosine + NH4(+). Catalyzes the hydrolytic deamination of adenosine and 2-deoxyadenosine. This Serratia proteamaculans (strain 568) protein is Adenosine deaminase.